Here is a 32-residue protein sequence, read N- to C-terminus: Dermatoxin-J3 (32 aa).

A Glutamine amide modification is found at Gln-32.

Expressed by the skin glands.

It localises to the secreted. Its function is as follows. Antimicrobial peptide. The protein is Dermatoxin-J3 of Phasmahyla jandaia (Jandaia leaf frog).